Reading from the N-terminus, the 70-residue chain is Small ribosomal subunit protein bS21 (70 aa).

It belongs to the bacterial ribosomal protein bS21 family.

In Campylobacter hominis (strain ATCC BAA-381 / DSM 21671 / CCUG 45161 / LMG 19568 / NCTC 13146 / CH001A), this protein is Small ribosomal subunit protein bS21.